Consider the following 404-residue polypeptide: Starvation-sensing protein RspA (404 aa).

It belongs to the mandelate racemase/muconate lactonizing enzyme family.

Functionally, probably involved in the degradation of homoserine lactone (HSL) or of a metabolite of HSL that signals starvation. This chain is Starvation-sensing protein RspA, found in Escherichia coli (strain K12).